We begin with the raw amino-acid sequence, 340 residues long: Probable sugar phosphate/phosphate translocator At3g14410 (340 aa).

10 helical membrane-spanning segments follow: residues 12-32 (EFVT…QIFF), 44-64 (FPYP…LCFL), 80-100 (LEIY…TLWL), 110-130 (VAFA…LGVA), 141-161 (LLIM…ELNI), 163-183 (WIGV…LIFM), 197-217 (ISLM…PWIF), 234-254 (VVLT…FLVI), 260-282 (LTIR…LLFA), and 286-305 (LTII…AAYN). The disordered stretch occupies residues 320 to 340 (ETPGDAESIPLVSQGNTNTER). Polar residues predominate over residues 330 to 340 (LVSQGNTNTER).

The protein belongs to the TPT transporter family. TPT (TC 2.A.7.9) subfamily.

The protein resides in the membrane. This Arabidopsis thaliana (Mouse-ear cress) protein is Probable sugar phosphate/phosphate translocator At3g14410.